The following is a 436-amino-acid chain: Calcium/calmodulin-regulated receptor-like kinase 2 (436 aa).

The helical transmembrane segment at 7-34 (LVVIGISVGLALGLLLALLLFFAIKWYY) threads the bilayer. Residues 65 to 88 (DRANTESSQPPENGAPTQHQPWWN) are disordered. A compositionally biased stretch (polar residues) spans 69–88 (TESSQPPENGAPTQHQPWWN). Residues 114–375 (QNFTTVLGQG…PSIGEVTQFI (262 aa)) enclose the Protein kinase domain. ATP contacts are provided by residues 120-128 (LGQGSFGPV) and lysine 142. Phosphotyrosine is present on tyrosine 187. Aspartate 239 serves as the catalytic Proton acceptor. Threonine 276 is subject to Phosphothreonine. The residue at position 284 (tyrosine 284) is a Phosphotyrosine.

The protein belongs to the protein kinase superfamily. Ser/Thr protein kinase family.

The protein localises to the cell membrane. It carries out the reaction L-seryl-[protein] + ATP = O-phospho-L-seryl-[protein] + ADP + H(+). The catalysed reaction is L-threonyl-[protein] + ATP = O-phospho-L-threonyl-[protein] + ADP + H(+). This Arabidopsis thaliana (Mouse-ear cress) protein is Calcium/calmodulin-regulated receptor-like kinase 2.